The chain runs to 382 residues: C-type lectin domain-containing protein 38 (382 aa).

Residues 1–40 (MAIFYDDPLERLNQPIKTKSYRKKQVVQRVHVFIFDNWKL) lie on the Cytoplasmic side of the membrane. The chain crosses the membrane as a helical span at residues 41–61 (ILLGILNLIFLIIAIVFAILF). The Extracellular segment spans residues 62-382 (FVGSADCAQL…FFLCKRAIDF (321 aa)). Positions 97 to 116 (NAITTTQGTPSNKTSTTTPS) are disordered. Over residues 100-116 (TTTQGTPSNKTSTTTPS) the composition is skewed to low complexity. N-linked (GlcNAc...) asparagine glycans are attached at residues Asn-108 and Asn-189. C-type lectin domains are found at residues 129 to 250 (VGTK…FVCE) and 264 to 377 (YNKN…FLCK). Intrachain disulfides connect Cys-150–Cys-249, Cys-223–Cys-241, Cys-285–Cys-376, and Cys-348–Cys-368.

Expressed in ventral cord motor neurons and PLM touch neurons.

The protein resides in the membrane. Involved in negative modulation of unc-40-mediated axon outgrowth. Required for proper presynaptic development in axons that have reached their targets. May function in concert with E3 ubiquitin-protein ligase rpm-1 in regulating axon outgrowth. The protein is C-type lectin domain-containing protein 38 of Caenorhabditis elegans.